A 153-amino-acid polypeptide reads, in one-letter code: UPF0178 protein CC_1215 (153 aa).

Belongs to the UPF0178 family.

This is UPF0178 protein CC_1215 from Caulobacter vibrioides (strain ATCC 19089 / CIP 103742 / CB 15) (Caulobacter crescentus).